The sequence spans 287 residues: Protease HtpX (287 aa).

2 helical membrane passes run 4-24 (IFLL…VMSI) and 33-53 (GGLL…SLAI). His-139 provides a ligand contact to Zn(2+). Glu-140 is a catalytic residue. Residue His-143 coordinates Zn(2+). A run of 2 helical transmembrane segments spans residues 154–174 (LIQG…AGII) and 195–215 (AVVF…VAYF). Residue Glu-220 coordinates Zn(2+).

Belongs to the peptidase M48B family. The cofactor is Zn(2+).

Its subcellular location is the cell inner membrane. The chain is Protease HtpX from Shewanella putrefaciens (strain CN-32 / ATCC BAA-453).